Here is a 256-residue protein sequence, read N- to C-terminus: Post-translational flagellin modification protein A (256 aa).

Serine 145 is a substrate binding site. The active-site Proton acceptor is tyrosine 168.

The protein belongs to the short-chain dehydrogenases/reductases (SDR) family.

Functionally, required for biosynthesis of LAH modification in the post-translational modification of Campylobacter coli flagellin. In Campylobacter coli, this protein is Post-translational flagellin modification protein A (ptmA).